The primary structure comprises 121 residues: Basic phospholipase A2 CoaTx-II (121 aa).

7 disulfides stabilise this stretch: cysteine 26–cysteine 115, cysteine 28–cysteine 44, cysteine 43–cysteine 95, cysteine 49–cysteine 121, cysteine 50–cysteine 88, cysteine 57–cysteine 81, and cysteine 75–cysteine 86. The segment at 105 to 117 is important for membrane-damaging activities in eukaryotes and bacteria; heparin-binding; it reads KKYRIYPKFLCKK.

Belongs to the phospholipase A2 family. Group II subfamily. K49 sub-subfamily. As to quaternary structure, homodimer; non-covalently-linked. As to expression, expressed by the venom gland.

Its subcellular location is the secreted. Its function is as follows. Snake venom phospholipase A2 (PLA2) that lacks enzymatic inactivity. It shows antibacterial activity against both Gram-negative and Gram-positive bacteria, including methicillin-resistant strains. In vivo, it causes local muscular damage, but no systemic damage (intravenous administration does not elevate plasma creatine kinase). Also causes an inflammatory activity that is demonstrated by mice paw edema induction and pro-inflammatory cytokine IL-6 elevation. A model of myotoxic mechanism has been proposed: an apo Lys49-PLA2 is activated by the entrance of a hydrophobic molecule (e.g. fatty acid) at the hydrophobic channel of the protein leading to a reorientation of a monomer. This reorientation causes a transition between 'inactive' to 'active' states, causing alignment of C-terminal and membrane-docking sites (MDoS) side-by-side and putting the membrane-disruption sites (MDiS) in the same plane, exposed to solvent and in a symmetric position for both monomers. The MDoS region stabilizes the toxin on membrane by the interaction of charged residues with phospholipid head groups. Subsequently, the MDiS region destabilizes the membrane with penetration of hydrophobic residues. This insertion causes a disorganization of the membrane, allowing an uncontrolled influx of ions (i.e. calcium and sodium), and eventually triggering irreversible intracellular alterations and cell death. The polypeptide is Basic phospholipase A2 CoaTx-II (Crotalus lutosus abyssus (Grand Canyon rattlesnake)).